We begin with the raw amino-acid sequence, 101 residues long: Small ribosomal subunit protein uS14 (101 aa).

Residues 1-10 are compositionally biased toward basic and acidic residues; that stretch reads MAKKSSIEKN. The tract at residues 1 to 23 is disordered; sequence MAKKSSIEKNNRRKKMTKNAAPK. The segment covering 11–23 has biased composition (basic residues); that stretch reads NRRKKMTKNAAPK.

It belongs to the universal ribosomal protein uS14 family. As to quaternary structure, part of the 30S ribosomal subunit. Contacts proteins S3 and S10.

Functionally, binds 16S rRNA, required for the assembly of 30S particles and may also be responsible for determining the conformation of the 16S rRNA at the A site. The sequence is that of Small ribosomal subunit protein uS14 from Rhodopseudomonas palustris (strain HaA2).